Consider the following 77-residue polypeptide: Putative defensin-like protein 129 (77 aa).

An N-terminal signal peptide occupies residues 1 to 25 (MTKNTALTIFMVVLVIEMVMEETQG). Disulfide bonds link Cys-28-Cys-77, Cys-37-Cys-59, Cys-42-Cys-71, and Cys-46-Cys-73.

The protein belongs to the DEFL family.

Its subcellular location is the secreted. This Arabidopsis thaliana (Mouse-ear cress) protein is Putative defensin-like protein 129 (LCR13).